The sequence spans 234 residues: Leucyl/phenylalanyl-tRNA--protein transferase (234 aa).

This sequence belongs to the L/F-transferase family.

The protein resides in the cytoplasm. It carries out the reaction N-terminal L-lysyl-[protein] + L-leucyl-tRNA(Leu) = N-terminal L-leucyl-L-lysyl-[protein] + tRNA(Leu) + H(+). The enzyme catalyses N-terminal L-arginyl-[protein] + L-leucyl-tRNA(Leu) = N-terminal L-leucyl-L-arginyl-[protein] + tRNA(Leu) + H(+). It catalyses the reaction L-phenylalanyl-tRNA(Phe) + an N-terminal L-alpha-aminoacyl-[protein] = an N-terminal L-phenylalanyl-L-alpha-aminoacyl-[protein] + tRNA(Phe). In terms of biological role, functions in the N-end rule pathway of protein degradation where it conjugates Leu, Phe and, less efficiently, Met from aminoacyl-tRNAs to the N-termini of proteins containing an N-terminal arginine or lysine. This chain is Leucyl/phenylalanyl-tRNA--protein transferase, found in Shigella dysenteriae serotype 1 (strain Sd197).